The chain runs to 212 residues: Riboflavin kinase (212 aa).

Positions 1–83 (MTELYCERKT…NLLRYFDIAS (83 aa)) are unknown. Residues 84–212 (IKLVGRVVTG…GDRVELEVYL (129 aa)) form a riboflavin kinase region. CDP is bound at residue 93–98 (GLGEGA). Positions 122 and 124 each coordinate Mg(2+). 2 residues coordinate FMN: T179 and E187. A CDP-binding site is contributed by 192–195 (VRVR).

Belongs to the archaeal riboflavin kinase family. It depends on Mg(2+) as a cofactor.

It carries out the reaction riboflavin + CTP = CDP + FMN + H(+). The protein operates within cofactor biosynthesis; FMN biosynthesis; FMN from riboflavin (CTP route): step 1/1. Functionally, catalyzes the CTP-dependent phosphorylation of riboflavin (vitamin B2) to form flavin mononucleotide (FMN). The protein is Riboflavin kinase (ribK) of Pyrobaculum calidifontis (strain DSM 21063 / JCM 11548 / VA1).